The primary structure comprises 354 residues: Virulence plasmid protein pGP2-D (354 aa).

In Chlamydia trachomatis serovar L2 (strain ATCC VR-902B / DSM 19102 / 434/Bu), this protein is Virulence plasmid protein pGP2-D.